The primary structure comprises 433 residues: MEPRVGNKFRLGRKIGSGSFGEIYLGTDVQTNEEVAIKLESVKTAHPQLSYESRIYRVLQGGTGIPNMKWYGVEGDYNVLVMDLLGPSLEDLFSYCKRQFSLKTVLMLADQMINRLEFIHSKSYLHRDIKPDNFLMGLGRRANQVYIIDYGLAKKYRDSSTHRHIPYRENKSLIGTPRYASLNTHLGIEQSRRDDIESLGYILMYFLKGSLPWQGLKAGNKKQKYDKISEKKVSTSIETLCRGHPTEFASYFHYCRSLRFDDKPDYAYLKRLFRNLFIREGFQFDFVFDWTVYKYQQSQSGNPQPRPHDGGVGTSSGLNPAVGNSEKRPDVPNQRTNPDFTLKQKDKNGNDSAIAKDKLLPGSLNLGRSEGSSSRRVVDTSSREPFSGGSDNANYETALKGIDGLRINNNAGDETAATPQSNGDDVEPQSKAL.

Positions 9–278 constitute a Protein kinase domain; it reads FRLGRKIGSG…LKRLFRNLFI (270 aa). ATP contacts are provided by residues 15 to 23 and Lys-38; that span reads IGSGSFGEI. Asp-128 (proton acceptor) is an active-site residue. The segment at 297–433 is disordered; sequence QSQSGNPQPR…DDVEPQSKAL (137 aa). The segment covering 342-359 has biased composition (basic and acidic residues); sequence LKQKDKNGNDSAIAKDKL. A compositionally biased stretch (low complexity) spans 362–375; it reads GSLNLGRSEGSSSR. Phosphoserine is present on Ser-390. Over residues 407-423 the composition is skewed to polar residues; that stretch reads INNNAGDETAATPQSNG.

Belongs to the protein kinase superfamily. CK1 Ser/Thr protein kinase family. Casein kinase I subfamily. As to quaternary structure, monomer. Autophosphorylated.

It localises to the cytoplasm. The enzyme catalyses L-seryl-[protein] + ATP = O-phospho-L-seryl-[protein] + ADP + H(+). The catalysed reaction is L-threonyl-[protein] + ATP = O-phospho-L-threonyl-[protein] + ADP + H(+). Functionally, casein kinases are operationally defined by their preferential utilization of acidic proteins such as caseins as substrates. It can phosphorylate a large number of proteins. The protein is Casein kinase 1-like protein 5 of Arabidopsis thaliana (Mouse-ear cress).